Consider the following 576-residue polypeptide: MRASTYHLNTLKEAPAEAEVASHRLMTRAGMIRKLAGGIYTYMPLGLKVIRKIEAIVRAEMDAAGAIELLMPVVQPAELWQESGRWEQYGAELLRIKDRHQRDFVLQPTSEEVITDIARNEIHSYRQLPLNFYHIQTKFRDERRPRFGLMRGREFTMKDAYSFDRDEAGAQQSYDKMYDAYMRIFERLGLQFRAVAADTGSIGGSRSHEFQVIADTGEDLLVYNPDSQYAANIELAEAPALLAERAAATQPLEAVPTPGAAKCADVAKLLGLPLERTLKSIVLATEPEPGKVQVWLLLLRGDHELNEIKAGKLPGLAGFRFATEDEIVAHFGCKPGYLGPIGTALPVRVVADRTVANMADFVCGANREDFHYQGANWGRDLPEPELVADLRNVVEGDPAPDGAGRLAIQRGIEVGHVFFLGTKYSEALKATFLDETGKPALLQMGCYGIGITRIAGAAIEQNHDERGIIWPRAIAPFEVVICPVGWGKNETVRNESVKLYDALRARGVDVILDDRDARPGVMFAEWELIGVPLRVTVGERGLNDGVVELQARRESTAAKIPAGSALEQVLAKLETL.

It belongs to the class-II aminoacyl-tRNA synthetase family. ProS type 1 subfamily. As to quaternary structure, homodimer.

The protein localises to the cytoplasm. It catalyses the reaction tRNA(Pro) + L-proline + ATP = L-prolyl-tRNA(Pro) + AMP + diphosphate. In terms of biological role, catalyzes the attachment of proline to tRNA(Pro) in a two-step reaction: proline is first activated by ATP to form Pro-AMP and then transferred to the acceptor end of tRNA(Pro). As ProRS can inadvertently accommodate and process non-cognate amino acids such as alanine and cysteine, to avoid such errors it has two additional distinct editing activities against alanine. One activity is designated as 'pretransfer' editing and involves the tRNA(Pro)-independent hydrolysis of activated Ala-AMP. The other activity is designated 'posttransfer' editing and involves deacylation of mischarged Ala-tRNA(Pro). The misacylated Cys-tRNA(Pro) is not edited by ProRS. This Bordetella petrii (strain ATCC BAA-461 / DSM 12804 / CCUG 43448) protein is Proline--tRNA ligase.